We begin with the raw amino-acid sequence, 157 residues long: Small ribosomal subunit protein uS7 (157 aa).

Belongs to the universal ribosomal protein uS7 family. As to quaternary structure, part of the 30S ribosomal subunit. Contacts proteins S9 and S11.

Its function is as follows. One of the primary rRNA binding proteins, it binds directly to 16S rRNA where it nucleates assembly of the head domain of the 30S subunit. Is located at the subunit interface close to the decoding center, probably blocks exit of the E-site tRNA. In Borrelia turicatae (strain 91E135), this protein is Small ribosomal subunit protein uS7.